A 180-amino-acid chain; its full sequence is Acireductone dioxygenase (180 aa).

Positions 97, 99, 103, and 141 each coordinate Fe(2+). Ni(2+)-binding residues include H97, H99, E103, and H141.

The protein belongs to the acireductone dioxygenase (ARD) family. As to quaternary structure, monomer. Requires Fe(2+) as cofactor. Ni(2+) serves as cofactor.

It catalyses the reaction 1,2-dihydroxy-5-(methylsulfanyl)pent-1-en-3-one + O2 = 3-(methylsulfanyl)propanoate + CO + formate + 2 H(+). It carries out the reaction 1,2-dihydroxy-5-(methylsulfanyl)pent-1-en-3-one + O2 = 4-methylsulfanyl-2-oxobutanoate + formate + 2 H(+). Its pathway is amino-acid biosynthesis; L-methionine biosynthesis via salvage pathway; L-methionine from S-methyl-5-thio-alpha-D-ribose 1-phosphate: step 5/6. Functionally, catalyzes 2 different reactions between oxygen and the acireductone 1,2-dihydroxy-3-keto-5-methylthiopentene (DHK-MTPene) depending upon the metal bound in the active site. Fe-containing acireductone dioxygenase (Fe-ARD) produces formate and 2-keto-4-methylthiobutyrate (KMTB), the alpha-ketoacid precursor of methionine in the methionine recycle pathway. Ni-containing acireductone dioxygenase (Ni-ARD) produces methylthiopropionate, carbon monoxide and formate, and does not lie on the methionine recycle pathway. This chain is Acireductone dioxygenase, found in Enterobacter sp. (strain 638).